Here is a 282-residue protein sequence, read N- to C-terminus: 4-diphosphocytidyl-2-C-methyl-D-erythritol kinase (282 aa).

K13 is a catalytic residue. Residue 96-106 (PMGGGIGGGSS) participates in ATP binding. D138 is an active-site residue.

The protein belongs to the GHMP kinase family. IspE subfamily.

It carries out the reaction 4-CDP-2-C-methyl-D-erythritol + ATP = 4-CDP-2-C-methyl-D-erythritol 2-phosphate + ADP + H(+). The protein operates within isoprenoid biosynthesis; isopentenyl diphosphate biosynthesis via DXP pathway; isopentenyl diphosphate from 1-deoxy-D-xylulose 5-phosphate: step 3/6. Its function is as follows. Catalyzes the phosphorylation of the position 2 hydroxy group of 4-diphosphocytidyl-2C-methyl-D-erythritol. The sequence is that of 4-diphosphocytidyl-2-C-methyl-D-erythritol kinase from Pseudomonas syringae pv. syringae (strain B728a).